Reading from the N-terminus, the 256-residue chain is Expansin-like B1 (256 aa).

The N-terminal stretch at 1-24 (MAQLLRRHLPVILSLILFLSKATA) is a signal peptide. Residue Asn27 is glycosylated (N-linked (GlcNAc...) asparagine). The Expansin-like EG45 domain occupies 46 to 150 (NGACEYGAFG…RRVSCTYPNK (105 aa)). The region spanning 164–249 (NYLEFEIWYQ…NWTAGATYDS (86 aa)) is the Expansin-like CBD domain. N-linked (GlcNAc...) asparagine glycosylation is found at Asn189 and Asn240.

It belongs to the expansin family. Expansin-like B subfamily.

The protein localises to the secreted. This Oryza sativa subsp. japonica (Rice) protein is Expansin-like B1 (EXLB1).